We begin with the raw amino-acid sequence, 404 residues long: Propionate kinase (404 aa).

Belongs to the acetokinase family. PduW subfamily.

The protein localises to the cytoplasm. The enzyme catalyses propanoate + ATP = propanoyl phosphate + ADP. Its pathway is polyol metabolism; 1,2-propanediol degradation. In terms of biological role, works with phosphate acetyltransferase (pta) to capture exogenous propionate and regenerate propionyl-CoA during degradation of 1,2-propanediol (1,2-PD). In Escherichia fergusonii (strain ATCC 35469 / DSM 13698 / CCUG 18766 / IAM 14443 / JCM 21226 / LMG 7866 / NBRC 102419 / NCTC 12128 / CDC 0568-73), this protein is Propionate kinase.